The chain runs to 504 residues: Beta-glucosidase 24 (504 aa).

Positions 1 to 18 (MELLWLLLLLLMASSTSS) are cleaved as a signal peptide. Residue Gln47 participates in a beta-D-glucoside binding. Asn75 is a glycosylation site (N-linked (GlcNAc...) asparagine). A beta-D-glucoside-binding positions include His151 and 196–197 (NE). Residue Glu197 is the Proton donor of the active site. Cys216 and Cys224 form a disulfide bridge. N-linked (GlcNAc...) asparagine glycosylation occurs at Asn329. Tyr340 provides a ligand contact to a beta-D-glucoside. The N-linked (GlcNAc...) asparagine glycan is linked to Asn371. Glu411 provides a ligand contact to a beta-D-glucoside. The active-site Nucleophile is Glu411. An N-linked (GlcNAc...) asparagine glycan is attached at Asn421. A beta-D-glucoside-binding positions include Trp460, 467-468 (EW), and Phe476.

This sequence belongs to the glycosyl hydrolase 1 family.

The enzyme catalyses Hydrolysis of terminal, non-reducing beta-D-glucosyl residues with release of beta-D-glucose.. This Oryza sativa subsp. japonica (Rice) protein is Beta-glucosidase 24 (BGLU24).